Reading from the N-terminus, the 186-residue chain is UPF0301 protein Swit_2673 (186 aa).

The protein belongs to the UPF0301 (AlgH) family.

The protein is UPF0301 protein Swit_2673 of Rhizorhabdus wittichii (strain DSM 6014 / CCUG 31198 / JCM 15750 / NBRC 105917 / EY 4224 / RW1) (Sphingomonas wittichii).